Here is a 133-residue protein sequence, read N- to C-terminus: Histone H2A.1 (133 aa).

Residues 1–23 (MSTTGKGGKAKGKTASSKQVSRS) are disordered. Position 2 is an N-acetylserine (Ser-2). Lys-6, Lys-9, Lys-11, Lys-13, and Lys-18 each carry N6-acetyllysine. Ser-123 carries the phosphoserine modification. A Glycyl lysine isopeptide (Lys-Gly) (interchain with G-Cter in ubiquitin) cross-link involves residue Lys-124.

It belongs to the histone H2A family. The nucleosome is a histone octamer containing two molecules each of H2A, H2B, H3 and H4 assembled in one H3-H4 heterotetramer and two H2A-H2B heterodimers. The octamer wraps approximately 147 bp of DNA. In terms of processing, monoubiquitination of Lys-124 gives a specific tag for epigenetic transcriptional repression. Acetylation occurs almost exclusively in the MAC.

The protein resides in the nucleus. Its subcellular location is the chromosome. Its function is as follows. Core component of nucleosome. Nucleosomes wrap and compact DNA into chromatin, limiting DNA accessibility to the cellular machineries which require DNA as a template. Histones thereby play a central role in transcription regulation, DNA repair, DNA replication and chromosomal stability. DNA accessibility is regulated via a complex set of post-translational modifications of histones, also called histone code, and nucleosome remodeling. The sequence is that of Histone H2A.1 (HTA2) from Tetrahymena thermophila (strain SB210).